Reading from the N-terminus, the 566-residue chain is Membrane protein insertase YidC (566 aa).

Residues 7-27 form a helical membrane-spanning segment; it reads ILIVALAIVSYVMVLKWNQDY. The interval 38–72 is disordered; sequence ASSTTAPGLPDAPTGTSAANDDIPRAASDTTAPAE. The next 5 membrane-spanning stretches (helical) occupy residues 347–367, 373–393, 443–463, 474–494, and 521–541; these read LELT…FWLL, LVGN…GIFF, LGGC…YWVL, FMLW…PIIM, and PIIF…YWVV.

The protein belongs to the OXA1/ALB3/YidC family. Type 1 subfamily. As to quaternary structure, interacts with the Sec translocase complex via SecD. Specifically interacts with transmembrane segments of nascent integral membrane proteins during membrane integration.

It is found in the cell inner membrane. Functionally, required for the insertion and/or proper folding and/or complex formation of integral membrane proteins into the membrane. Involved in integration of membrane proteins that insert both dependently and independently of the Sec translocase complex, as well as at least some lipoproteins. Aids folding of multispanning membrane proteins. The protein is Membrane protein insertase YidC of Pseudomonas fluorescens (strain ATCC BAA-477 / NRRL B-23932 / Pf-5).